The primary structure comprises 193 residues: Zinc finger CCHC domain-containing protein 17 (193 aa).

Residues 1–40 (MSSCRVDKPSEIVDVGDKVWVKLIGREMKNDRIKVSLSMK) form the S1 motif; truncated domain. Position 66 is a phosphoserine (serine 66). The CCHC-type zinc-finger motif lies at 83 to 100 (TTCKKCGCKGHFAKDCFM). Lysine 96 is subject to N6-acetyllysine. The disordered stretch occupies residues 113–193 (EEEEKEEAKS…KKKHKKKHKE (81 aa)). Residues 118-129 (EEAKSAEFEKPV) are compositionally biased toward basic and acidic residues. Basic residues predominate over residues 134–150 (PSRKRKKEKKKKKHRDR). Residue serine 135 is modified to Phosphoserine. Positions 163-177 (DTGKRARHTSKDSKA) are enriched in basic and acidic residues. The segment covering 178–193 (AKKKKKKKKHKKKHKE) has biased composition (basic residues).

As to quaternary structure, may interact with PNN. May associate with the 60 S ribosomal subunit.

Its subcellular location is the nucleus. It localises to the nucleolus. This is Zinc finger CCHC domain-containing protein 17 (ZCCHC17) from Macaca fascicularis (Crab-eating macaque).